An 863-amino-acid polypeptide reads, in one-letter code: Glycerol-3-phosphate acyltransferase (863 aa).

A disordered region spans residues 1 to 29 (MPKKNSPLLPKETTTTQSSVDTSGSSNLT). The segment covering 12-29 (ETTTTQSSVDTSGSSNLT) has biased composition (polar residues). Residues 343-348 (SHRSHI) carry the HXXXXD motif motif.

The protein belongs to the GPAT/DAPAT family.

Its subcellular location is the cell inner membrane. The catalysed reaction is sn-glycerol 3-phosphate + an acyl-CoA = a 1-acyl-sn-glycero-3-phosphate + CoA. It participates in phospholipid metabolism; CDP-diacylglycerol biosynthesis; CDP-diacylglycerol from sn-glycerol 3-phosphate: step 1/3. This chain is Glycerol-3-phosphate acyltransferase, found in Xylella fastidiosa (strain M12).